We begin with the raw amino-acid sequence, 424 residues long: Acetyl-CoA acetyltransferase, mitochondrial (424 aa).

Residues 1–30 (MAALVALHGVVRRPLLRGLLQEVRCLERSY) constitute a mitochondrion transit peptide. Lys63 carries the N6-acetyllysine; alternate modification. Lys63 carries the N6-succinyllysine; alternate modification. The residue at position 75 (Lys75) is an N6-succinyllysine. The Acyl-thioester intermediate role is filled by Cys123. N6-acetyllysine; alternate is present on residues Lys171, Lys178, Lys187, and Lys199. 4 positions are modified to N6-succinyllysine; alternate: Lys171, Lys178, Lys187, and Lys199. Ser204 carries the phosphoserine modification. Tyr216 is a binding site for CoA. Tyr216 is a binding site for K(+). N6-acetyllysine; alternate occurs at positions 220 and 227. Residues Lys220 and Lys227 each carry the N6-succinyllysine; alternate modification. Lys240 is subject to N6-succinyllysine. An N6-acetyllysine; alternate modification is found at Lys242. The residue at position 242 (Lys242) is an N6-succinyllysine; alternate. 2 positions are modified to N6-acetyllysine: Lys248 and Lys254. Residues 255–257 (RVD) and Lys260 each bind CoA. Position 260 is an N6-acetyllysine; alternate (Lys260). Lys260 bears the N6-succinyllysine; alternate mark. An N6-succinyllysine mark is found at Lys263 and Lys265. Lys270 bears the N6-acetyllysine mark. Residues Ala277, Ala278, and Ala280 each contribute to the K(+) site. A CoA-binding site is contributed by Ser281. Residue Lys335 is modified to N6-acetyllysine. Val378 contributes to the K(+) binding site. Cys410 functions as the Proton donor/acceptor in the catalytic mechanism.

It belongs to the thiolase-like superfamily. Thiolase family. Homotetramer. Succinylation at Lys-265, adjacent to a coenzyme A binding site. Desuccinylated by SIRT5.

It is found in the mitochondrion. It catalyses the reaction 2 acetyl-CoA = acetoacetyl-CoA + CoA. It carries out the reaction propanoyl-CoA + acetyl-CoA = 2-methyl-3-oxobutanoyl-CoA + CoA. Its pathway is lipid metabolism; fatty acid beta-oxidation. Activated by potassium ions, but not sodium ions. Functionally, this is one of the enzymes that catalyzes the last step of the mitochondrial beta-oxidation pathway, an aerobic process breaking down fatty acids into acetyl-CoA. Using free coenzyme A/CoA, catalyzes the thiolytic cleavage of medium- to long-chain 3-oxoacyl-CoAs into acetyl-CoA and a fatty acyl-CoA shortened by two carbon atoms. The activity of the enzyme is reversible and it can also catalyze the condensation of two acetyl-CoA molecules into acetoacetyl-CoA. Thereby, it plays a major role in ketone body metabolism. This Mus musculus (Mouse) protein is Acetyl-CoA acetyltransferase, mitochondrial (Acat1).